A 529-amino-acid polypeptide reads, in one-letter code: Transcription factor kayak (529 aa).

Polar residues predominate over residues 118–134 (LQGTDSDNSNASWADAQ). Disordered regions lie at residues 118 to 166 (LQGT…SVNG) and 180 to 239 (NAGR…CRKR). Composition is skewed to low complexity over residues 142–153 (TDTSSAHTDSTS) and 182–201 (GRGSTQGSNTNTSNSATPAR). Residues 219 to 282 (EEKRRIRRER…NQLEFFLRAH (64 aa)) form the bZIP domain. Positions 221–240 (KRRIRRERNKQAAARCRKRR) are basic motif. Residues 247-275 (LTYEVEQLEKKRDGLKKEMETLTDVKNQL) are leucine-zipper. Disordered stretches follow at residues 311-390 (AGSC…PMST) and 493-529 (DGGTGLTPVSGPLVPSQNKHPLELPTPTAEPSKLVSL). Positions 315–332 (DSGSSSHHNNNSNDSSNG) are enriched in low complexity. Residues 340-350 (SLNSTGRSNSP) show a composition bias toward polar residues. Residue S349 is modified to Phosphoserine. Residues 363–375 (DGGLDSSCLLDQD) are compositionally biased toward low complexity. Over residues 376–387 (GPPPSKRFPLPP) the composition is skewed to pro residues.

This sequence belongs to the bZIP family. Fos subfamily. As to quaternary structure, homodimer. Heterodimer with Jra. The kay-Jra heterodimer binds more stably to the AP-1 site than either of the two proteins alone.

The protein localises to the nucleus. In terms of biological role, developmentally regulated transcription factor AP-1 binds and recognizes the enhancer DNA sequence: 5'-TGA[CG]TCA-3'. May play a role in the function or determination of a particular subset of cells in the developing embryo. Is able to carry out its function either independently of or in conjunction with Jra. The chain is Transcription factor kayak from Drosophila ananassae (Fruit fly).